The primary structure comprises 186 residues: Orotate phosphoribosyltransferase (186 aa).

5-phospho-alpha-D-ribose 1-diphosphate-binding positions include Arg-93, Lys-94, Lys-97, His-99, and 119-127; that span reads EDVTTTGGS. Residues Thr-123 and Arg-151 each coordinate orotate.

This sequence belongs to the purine/pyrimidine phosphoribosyltransferase family. PyrE subfamily. As to quaternary structure, homodimer. Mg(2+) is required as a cofactor.

It carries out the reaction orotidine 5'-phosphate + diphosphate = orotate + 5-phospho-alpha-D-ribose 1-diphosphate. Its pathway is pyrimidine metabolism; UMP biosynthesis via de novo pathway; UMP from orotate: step 1/2. Catalyzes the transfer of a ribosyl phosphate group from 5-phosphoribose 1-diphosphate to orotate, leading to the formation of orotidine monophosphate (OMP). In Pyrococcus horikoshii (strain ATCC 700860 / DSM 12428 / JCM 9974 / NBRC 100139 / OT-3), this protein is Orotate phosphoribosyltransferase.